The primary structure comprises 1005 residues: uncharacterized protein (1005 aa).

An N-terminal signal peptide occupies residues 1–24 (MKFQRKYWGLLSTLGVSSAVALSA). Cys25 carries N-palmitoyl cysteine lipidation. Cys25 is lipidated: S-diacylglycerol cysteine. 2 disordered regions span residues 105-165 (KKDK…EEKF) and 786-825 (TQKI…WDDV). Composition is skewed to low complexity over residues 110 to 131 (TSSQ…TSTS) and 145 to 156 (QSSSNGQNNQQS). Over residues 786–801 (TQKIDQQNTASTTSDV) the composition is skewed to polar residues.

The protein localises to the cell membrane. This is an uncharacterized protein from Mycoplasma pneumoniae (strain ATCC 29342 / M129 / Subtype 1) (Mycoplasmoides pneumoniae).